A 268-amino-acid chain; its full sequence is Tryptophan synthase alpha chain (268 aa).

Catalysis depends on proton acceptor residues Glu49 and Asp60.

Belongs to the TrpA family. As to quaternary structure, tetramer of two alpha and two beta chains.

It carries out the reaction (1S,2R)-1-C-(indol-3-yl)glycerol 3-phosphate + L-serine = D-glyceraldehyde 3-phosphate + L-tryptophan + H2O. The protein operates within amino-acid biosynthesis; L-tryptophan biosynthesis; L-tryptophan from chorismate: step 5/5. The alpha subunit is responsible for the aldol cleavage of indoleglycerol phosphate to indole and glyceraldehyde 3-phosphate. This is Tryptophan synthase alpha chain from Vibrio parahaemolyticus serotype O3:K6 (strain RIMD 2210633).